The following is a 207-amino-acid chain: MSNTFATLPVMAGDDVPAGPVDPIFNRLLKDRIIWMGEEVKDDMANRICAQLLMLAAEDPKKDIWLYINSPGGSITAGMAIYDTMQLIEPDVATVGLGMCASMGQFLLSSGTKGKRYLTSHARVLMHQPSGGIGGTATDVRINAELIMDMKKTMSELTAEQTGHTLEEIYRDNEYDHWFTAQEALDYGFVDKLVTTPDTIGNNQQGE.

Ser102 functions as the Nucleophile in the catalytic mechanism. Residue His127 is part of the active site.

It belongs to the peptidase S14 family. In terms of assembly, fourteen ClpP subunits assemble into 2 heptameric rings which stack back to back to give a disk-like structure with a central cavity, resembling the structure of eukaryotic proteasomes.

The protein localises to the cytoplasm. The enzyme catalyses Hydrolysis of proteins to small peptides in the presence of ATP and magnesium. alpha-casein is the usual test substrate. In the absence of ATP, only oligopeptides shorter than five residues are hydrolyzed (such as succinyl-Leu-Tyr-|-NHMec, and Leu-Tyr-Leu-|-Tyr-Trp, in which cleavage of the -Tyr-|-Leu- and -Tyr-|-Trp bonds also occurs).. Functionally, cleaves peptides in various proteins in a process that requires ATP hydrolysis. Has a chymotrypsin-like activity. Plays a major role in the degradation of misfolded proteins. This is ATP-dependent Clp protease proteolytic subunit 2 from Bifidobacterium longum (strain NCC 2705).